The primary structure comprises 140 residues: Ribonuclease P protein component (140 aa).

The protein belongs to the RnpA family. Consists of a catalytic RNA component (M1 or rnpB) and a protein subunit.

The enzyme catalyses Endonucleolytic cleavage of RNA, removing 5'-extranucleotides from tRNA precursor.. RNaseP catalyzes the removal of the 5'-leader sequence from pre-tRNA to produce the mature 5'-terminus. It can also cleave other RNA substrates such as 4.5S RNA. The protein component plays an auxiliary but essential role in vivo by binding to the 5'-leader sequence and broadening the substrate specificity of the ribozyme. This Ralstonia pickettii (strain 12J) protein is Ribonuclease P protein component.